Consider the following 294-residue polypeptide: UDP-3-O-acyl-N-acetylglucosamine deacetylase (294 aa).

Zn(2+) contacts are provided by histidine 75, histidine 232, and aspartate 236. Residue histidine 259 is the Proton donor of the active site.

This sequence belongs to the LpxC family. It depends on Zn(2+) as a cofactor.

It carries out the reaction a UDP-3-O-[(3R)-3-hydroxyacyl]-N-acetyl-alpha-D-glucosamine + H2O = a UDP-3-O-[(3R)-3-hydroxyacyl]-alpha-D-glucosamine + acetate. It functions in the pathway glycolipid biosynthesis; lipid IV(A) biosynthesis; lipid IV(A) from (3R)-3-hydroxytetradecanoyl-[acyl-carrier-protein] and UDP-N-acetyl-alpha-D-glucosamine: step 2/6. Its function is as follows. Catalyzes the hydrolysis of UDP-3-O-myristoyl-N-acetylglucosamine to form UDP-3-O-myristoylglucosamine and acetate, the committed step in lipid A biosynthesis. This Campylobacter jejuni subsp. jejuni serotype O:23/36 (strain 81-176) protein is UDP-3-O-acyl-N-acetylglucosamine deacetylase.